Consider the following 231-residue polypeptide: MLRGTPGLGLGGLNRAEDFVEDLGRSCSEAGRNFGVLRRSSLDEAEEAAGRKRERPTRSKARRMAANVRERKRILDYNEAFNALRRALQHDLGGKRLSKIATLRRAIHRITALSLVLRASPAPRWPCGHLECHGQAAQGSSTGNSSFSVPRSAPSPIAPSLTRRDIASPLVPPTPRCASCSPHSHLGRPRVMAEVPNLAQTSGGNWRQCPGAPPVRPVSWRWGSGLGYQHS.

Residues 61–113 (ARRMAANVRERKRILDYNEAFNALRRALQHDLGGKRLSKIATLRRAIHRITAL) form the bHLH domain. The tract at residues 135–168 (QAAQGSSTGNSSFSVPRSAPSPIAPSLTRRDIAS) is disordered. Positions 137–149 (AQGSSTGNSSFSV) are enriched in polar residues.

As to quaternary structure, heterodimer. Efficient DNA binding requires dimerization with another bHLH protein. Interacts with TCF3, TCF4, and TCF12.

It is found in the nucleus. In terms of biological role, transcription factor, which play a role in limb development. Is an essential player in the regulatory network governing transcription of genes implicated in limb morphogenesis. This chain is Class A basic helix-loop-helix protein 9 (Bhlha9), found in Mus musculus (Mouse).